The chain runs to 311 residues: Linearmycin resistance ATP-binding protein LnrL (311 aa).

Positions 2-232 (LQAENIKKAY…LGGDTIIQLT (231 aa)) constitute an ABC transporter domain. An ATP-binding site is contributed by 34-41 (GPNGAGKS).

The protein belongs to the ABC transporter superfamily. The complex is composed of two ATP-binding proteins (LnrL) and two transmembrane proteins (LnrM and LnrN).

Functionally, required for resistance to linearmycins, a family of antibiotic-specialized metabolites produced by some streptomycetes. Part of the ABC transporter complex LnrLMN that probably facilitates linearmycin removal from the membrane. Responsible for energy coupling to the transport system. Also mediates KinC-dependent biofilm morphology. This chain is Linearmycin resistance ATP-binding protein LnrL, found in Bacillus subtilis (strain 168).